Consider the following 434-residue polypeptide: MSIDIDWERATSGPDGELLAERIRSFIHDKFQQIVLPRFIRSVQVTSFNFGTIPPELEIRDLCDPFPDFYEEDDNENFSESSEEQSPTREPVDRYGSKVESWQANSPGSLEDHMQGRMGFNGPLRMPPGEENTGISPLRSPMNFGDINPYLFPRSRTPGIPGGTSNLGYYMPLSGLSGSQTPLGTVARGSPFSGGWPDVHGARPSRRRSEVEPDSAQSRPSTANTGNTLLSRGSMSSGDPRHSHHSQGVPGSDHGQVLEPNMPPTSSDPPLDDLPPRRMREQKAEDFQVFCRTKYAGNISLSLTAEILLDYPMPSFVGLPLKLNITGLTFDAVAVIAYIRRRIHFCFLSPEDADALIGPEIGSGGGEDTLEPNSPRRKPLSLLREIRVESEIGRKENGKQALKNVGKVEKFVLEQVRRIFEEEFVYPSFWTFLV.

An SMP-LTD domain is found at 1–434 (MSIDIDWERA…VYPSFWTFLV (434 aa)). The span at 70-83 (YEEDDNENFSESSE) shows a compositional bias: acidic residues. 2 disordered regions span residues 70–141 (YEED…LRSP) and 181–277 (TPLG…LPPR). Positions 86–97 (SPTREPVDRYGS) are enriched in basic and acidic residues. The segment covering 215–237 (SAQSRPSTANTGNTLLSRGSMSS) has biased composition (polar residues).

The protein belongs to the MDM12 family. As to quaternary structure, component of the ER-mitochondria encounter structure (ERMES) or MDM complex, composed of MMM1, MDM10, MDM12 and MDM34. An MMM1 homodimer associates with one molecule of MDM12 on each side in a pairwise head-to-tail manner, and the SMP-LTD domains of MMM1 and MDM12 generate a continuous hydrophobic tunnel for phospholipid trafficking.

It is found in the mitochondrion outer membrane. Its subcellular location is the endoplasmic reticulum membrane. Component of the ERMES/MDM complex, which serves as a molecular tether to connect the endoplasmic reticulum (ER) and mitochondria. Components of this complex are involved in the control of mitochondrial shape and protein biogenesis, and function in nonvesicular lipid trafficking between the ER and mitochondria. MDM12 is required for the interaction of the ER-resident membrane protein MMM1 and the outer mitochondrial membrane-resident beta-barrel protein MDM10. The MDM12-MMM1 subcomplex functions in the major beta-barrel assembly pathway that is responsible for biogenesis of all mitochondrial outer membrane beta-barrel proteins, and acts in a late step after the SAM complex. The MDM10-MDM12-MMM1 subcomplex further acts in the TOM40-specific pathway after the action of the MDM12-MMM1 complex. Essential for establishing and maintaining the structure of mitochondria and maintenance of mtDNA nucleoids. This Ajellomyces dermatitidis (strain ER-3 / ATCC MYA-2586) (Blastomyces dermatitidis) protein is Mitochondrial distribution and morphology protein 12.